The chain runs to 338 residues: Lipoate-protein ligase A (338 aa).

A BPL/LPL catalytic domain is found at 29 to 216 (PATQRVLFLW…AFFAYYGERV (188 aa)). ATP-binding positions include arginine 71, 76-79 (GAVF), and lysine 134. Position 134 (lysine 134) interacts with (R)-lipoate.

This sequence belongs to the LplA family. Monomer.

The protein localises to the cytoplasm. The enzyme catalyses L-lysyl-[lipoyl-carrier protein] + (R)-lipoate + ATP = N(6)-[(R)-lipoyl]-L-lysyl-[lipoyl-carrier protein] + AMP + diphosphate + H(+). It participates in protein modification; protein lipoylation via exogenous pathway; protein N(6)-(lipoyl)lysine from lipoate: step 1/2. The protein operates within protein modification; protein lipoylation via exogenous pathway; protein N(6)-(lipoyl)lysine from lipoate: step 2/2. In terms of biological role, catalyzes both the ATP-dependent activation of exogenously supplied lipoate to lipoyl-AMP and the transfer of the activated lipoyl onto the lipoyl domains of lipoate-dependent enzymes. This is Lipoate-protein ligase A from Cronobacter sakazakii (strain ATCC BAA-894) (Enterobacter sakazakii).